The primary structure comprises 949 residues: Serine/threonine-protein kinase KIPK2 (949 aa).

Disordered regions lie at residues 79–116 (LETS…VGPS), 323–344 (TALS…TEKS), 407–426 (STST…DKNV), and 495–525 (SSEK…SNLS). Residues 81–94 (TSASAGTSRSTSPS) show a composition bias toward low complexity. 2 stretches are compositionally biased toward polar residues: residues 407 to 420 (STST…NTSH) and 495 to 512 (SSEK…LGDY). Residues 513 to 525 (SSSTSMSEESNLS) show a composition bias toward low complexity. The region spanning 559 to 898 (FNLLKKLGCG…AAEIKRHPFF (340 aa)) is the Protein kinase domain. Residues 565-573 (LGCGDIGTV) and lysine 588 each bind ATP. Residue aspartate 684 is the Proton acceptor of the active site.

It belongs to the protein kinase superfamily. Ser/Thr protein kinase family. Interacts with KCBP, PERK8, PERK9, PERK10 and PERK13.

It carries out the reaction L-seryl-[protein] + ATP = O-phospho-L-seryl-[protein] + ADP + H(+). The enzyme catalyses L-threonyl-[protein] + ATP = O-phospho-L-threonyl-[protein] + ADP + H(+). In terms of biological role, serine/threonine-protein kinase that could be involved in the negative regulation of root growth. The chain is Serine/threonine-protein kinase KIPK2 from Arabidopsis thaliana (Mouse-ear cress).